A 118-amino-acid chain; its full sequence is Large ribosomal subunit protein bL20 (118 aa).

It belongs to the bacterial ribosomal protein bL20 family.

Binds directly to 23S ribosomal RNA and is necessary for the in vitro assembly process of the 50S ribosomal subunit. It is not involved in the protein synthesizing functions of that subunit. The polypeptide is Large ribosomal subunit protein bL20 (Tolumonas auensis (strain DSM 9187 / NBRC 110442 / TA 4)).